The following is a 230-amino-acid chain: Orotidine 5'-phosphate decarboxylase (230 aa).

Substrate contacts are provided by residues Asp-11, Lys-34, 61–70 (DLKLHDIPNT), Thr-117, Arg-179, Gln-188, Gly-208, and Arg-209. The active-site Proton donor is Lys-63.

Belongs to the OMP decarboxylase family. Type 1 subfamily. As to quaternary structure, homodimer.

The catalysed reaction is orotidine 5'-phosphate + H(+) = UMP + CO2. It functions in the pathway pyrimidine metabolism; UMP biosynthesis via de novo pathway; UMP from orotate: step 2/2. Catalyzes the decarboxylation of orotidine 5'-monophosphate (OMP) to uridine 5'-monophosphate (UMP). This is Orotidine 5'-phosphate decarboxylase from Streptococcus pyogenes serotype M6 (strain ATCC BAA-946 / MGAS10394).